Consider the following 31-residue polypeptide: U13-ctenitoxin-Pn1b (31 aa).

3 disulfides stabilise this stretch: C3-C17, C10-C21, and C16-C30.

As to expression, expressed by the venom gland.

The protein resides in the secreted. Functionally, acts as a neurotoxin. The chain is U13-ctenitoxin-Pn1b from Phoneutria nigriventer (Brazilian armed spider).